The chain runs to 201 residues: Large ribosomal subunit protein uL4 (201 aa).

The interval 45-72 is disordered; it reads AQKTRAEVTGSGKKPWRQKGTGRARAGS.

Belongs to the universal ribosomal protein uL4 family. Part of the 50S ribosomal subunit.

One of the primary rRNA binding proteins, this protein initially binds near the 5'-end of the 23S rRNA. It is important during the early stages of 50S assembly. It makes multiple contacts with different domains of the 23S rRNA in the assembled 50S subunit and ribosome. Its function is as follows. Forms part of the polypeptide exit tunnel. The protein is Large ribosomal subunit protein uL4 of Shewanella baltica (strain OS223).